The primary structure comprises 495 residues: MTFPGDTAVLVLAAGPGTRMRSDTPKVLHTLAGRSMLSHVLHAIAKLAPQRLIVVLGHDHQRIAPLVGELADTLGRTIDVALQDRPLGTGHAVLCGLSALPDDYAGNVVVTSGDTPLLDADTLADLIATHRAVSAAVTVLTTTLDDPFGYGRILRTQDHGVMAIVEQTDATPSQREIREVNAGVYAFDIAALRSALSRLSSNNAQQELYLTDVIAILRSDGQTVHASHVDDSALVAGVNNRVQLAQLASELNRRVVAAHQLAGVTVVDPATTWIDVDVTIGRDTVIHPGTQLLGRTQIGGRCVVGPDTTLTDVAVGDGASVVRTHGSSSSIGDGAAVGPFTYLRPGTALGADGKLGAFVEVKNSTIGTGTKVPHLTYVGDADIGEYSNIGASSVFVNYDGTSKRRTTVGSHVRTGSDTMFVAPVTIGDGAYTGAGTVVREDVPPGALAVSAGPQRNIENWVQRKRPGSPAAQASKRASEMACQQPTQPPDADQTP.

The segment at 1-241 (MTFPGDTAVL…SALVAGVNNR (241 aa)) is pyrophosphorylase. UDP-N-acetyl-alpha-D-glucosamine-binding positions include 12-15 (LAAG), K26, Q83, 88-89 (GT), 112-114 (SGD), G151, E166, N181, and N239. D114 contacts Mg(2+). A Mg(2+)-binding site is contributed by N239. Positions 242–262 (VQLAQLASELNRRVVAAHQLA) are linker. An N-acetyltransferase region spans residues 263 to 495 (GVTVVDPATT…TQPPDADQTP (233 aa)). R344 and K362 together coordinate UDP-N-acetyl-alpha-D-glucosamine. Residue H374 is the Proton acceptor of the active site. UDP-N-acetyl-alpha-D-glucosamine-binding residues include Y377 and N388. Acetyl-CoA is bound by residues A391, 397-398 (NY), S416, and A434. Positions 457-495 (IENWVQRKRPGSPAAQASKRASEMACQQPTQPPDADQTP) are disordered. Residues 483–495 (QQPTQPPDADQTP) are compositionally biased toward low complexity.

In the N-terminal section; belongs to the N-acetylglucosamine-1-phosphate uridyltransferase family. The protein in the C-terminal section; belongs to the transferase hexapeptide repeat family. As to quaternary structure, homotrimer. Mg(2+) is required as a cofactor.

It localises to the cytoplasm. The catalysed reaction is alpha-D-glucosamine 1-phosphate + acetyl-CoA = N-acetyl-alpha-D-glucosamine 1-phosphate + CoA + H(+). It carries out the reaction N-acetyl-alpha-D-glucosamine 1-phosphate + UTP + H(+) = UDP-N-acetyl-alpha-D-glucosamine + diphosphate. It functions in the pathway nucleotide-sugar biosynthesis; UDP-N-acetyl-alpha-D-glucosamine biosynthesis; N-acetyl-alpha-D-glucosamine 1-phosphate from alpha-D-glucosamine 6-phosphate (route II): step 2/2. It participates in nucleotide-sugar biosynthesis; UDP-N-acetyl-alpha-D-glucosamine biosynthesis; UDP-N-acetyl-alpha-D-glucosamine from N-acetyl-alpha-D-glucosamine 1-phosphate: step 1/1. Its pathway is bacterial outer membrane biogenesis; LPS lipid A biosynthesis. Functionally, catalyzes the last two sequential reactions in the de novo biosynthetic pathway for UDP-N-acetylglucosamine (UDP-GlcNAc). The C-terminal domain catalyzes the transfer of acetyl group from acetyl coenzyme A to glucosamine-1-phosphate (GlcN-1-P) to produce N-acetylglucosamine-1-phosphate (GlcNAc-1-P), which is converted into UDP-GlcNAc by the transfer of uridine 5-monophosphate (from uridine 5-triphosphate), a reaction catalyzed by the N-terminal domain. The chain is Bifunctional protein GlmU from Mycobacterium bovis (strain ATCC BAA-935 / AF2122/97).